A 433-amino-acid chain; its full sequence is Bifunctional protein GlmU (433 aa).

A pyrophosphorylase region spans residues 1–226 (MLSVIILAAG…EECFLGVNSQ (226 aa)). UDP-N-acetyl-alpha-D-glucosamine contacts are provided by residues 7-10 (LAAG), lysine 21, and 80-81 (GT). Position 106 (aspartate 106) interacts with Mg(2+). Positions 138, 152, 167, and 224 each coordinate UDP-N-acetyl-alpha-D-glucosamine. Residue asparagine 224 participates in Mg(2+) binding. Residues 227-247 (TERAKAEEIMLERLRKNAMDL) form a linker region. Residues 248-433 (GVVMQLPNSI…NGYFKFFKKP (186 aa)) form an N-acetyltransferase region. Positions 311 and 328 each coordinate UDP-N-acetyl-alpha-D-glucosamine. Residue histidine 339 is the Proton acceptor of the active site. UDP-N-acetyl-alpha-D-glucosamine is bound by residues tyrosine 342 and asparagine 353. Residues alanine 356, 362–363 (NY), serine 381, serine 399, and arginine 416 each bind acetyl-CoA.

The protein in the N-terminal section; belongs to the N-acetylglucosamine-1-phosphate uridyltransferase family. In the C-terminal section; belongs to the transferase hexapeptide repeat family. In terms of assembly, homotrimer. Mg(2+) is required as a cofactor.

It is found in the cytoplasm. The catalysed reaction is alpha-D-glucosamine 1-phosphate + acetyl-CoA = N-acetyl-alpha-D-glucosamine 1-phosphate + CoA + H(+). The enzyme catalyses N-acetyl-alpha-D-glucosamine 1-phosphate + UTP + H(+) = UDP-N-acetyl-alpha-D-glucosamine + diphosphate. Its pathway is nucleotide-sugar biosynthesis; UDP-N-acetyl-alpha-D-glucosamine biosynthesis; N-acetyl-alpha-D-glucosamine 1-phosphate from alpha-D-glucosamine 6-phosphate (route II): step 2/2. It functions in the pathway nucleotide-sugar biosynthesis; UDP-N-acetyl-alpha-D-glucosamine biosynthesis; UDP-N-acetyl-alpha-D-glucosamine from N-acetyl-alpha-D-glucosamine 1-phosphate: step 1/1. It participates in bacterial outer membrane biogenesis; LPS lipid A biosynthesis. Catalyzes the last two sequential reactions in the de novo biosynthetic pathway for UDP-N-acetylglucosamine (UDP-GlcNAc). The C-terminal domain catalyzes the transfer of acetyl group from acetyl coenzyme A to glucosamine-1-phosphate (GlcN-1-P) to produce N-acetylglucosamine-1-phosphate (GlcNAc-1-P), which is converted into UDP-GlcNAc by the transfer of uridine 5-monophosphate (from uridine 5-triphosphate), a reaction catalyzed by the N-terminal domain. This Helicobacter pylori (strain ATCC 700392 / 26695) (Campylobacter pylori) protein is Bifunctional protein GlmU.